Reading from the N-terminus, the 366-residue chain is Adenine DNA glycosylase (366 aa).

Position 30–31 (30–31 (WR)) interacts with DNA. Glu43 (proton donor/acceptor) is an active-site residue. DNA-binding positions include 48 to 49 (QT), 86 to 88 (LGY), Tyr126, and Glu188. The HhH domain occupies 105-133 (RYGGKVPDDPDEFSRLKGVGPYTVGAVLS). [4Fe-4S] cluster is bound by residues Cys198, Cys205, Cys208, and Cys214. Ser308 contacts DNA.

The protein belongs to the Nth/MutY family. [4Fe-4S] cluster serves as cofactor.

The catalysed reaction is Hydrolyzes free adenine bases from 7,8-dihydro-8-oxoguanine:adenine mismatched double-stranded DNA, leaving an apurinic site.. Functionally, base excision repair (BER) glycosylase that initiates repair of A:oxoG to C:G by removing the inappropriately paired adenine base from the DNA backbone, generating an abasic site product. 8-oxoguanine (oxoG) is a genotoxic DNA lesion resulting from oxidation of guanine; this residue is misread by replicative DNA polymerases, that insert adenine instead of cytosine opposite the oxidized damaged base. Shows a powerful dicrimination of A versus C, since it does not cleave cytosine in oxoG:C pairs. May also be able to remove adenine from A:G mispairs, although this activity may not be physiologically relevant. This Geobacillus stearothermophilus (Bacillus stearothermophilus) protein is Adenine DNA glycosylase.